We begin with the raw amino-acid sequence, 354 residues long: Aspartate carbamoyltransferase catalytic subunit (354 aa).

Arg67 and Thr68 together coordinate carbamoyl phosphate. Lys95 lines the L-aspartate pocket. Carbamoyl phosphate-binding residues include Arg117, His150, and Gln153. L-aspartate contacts are provided by Arg190 and Arg261. 2 residues coordinate carbamoyl phosphate: Gly302 and Pro303.

This sequence belongs to the aspartate/ornithine carbamoyltransferase superfamily. ATCase family. Heterododecamer (2C3:3R2) of six catalytic PyrB chains organized as two trimers (C3), and six regulatory PyrI chains organized as three dimers (R2).

The catalysed reaction is carbamoyl phosphate + L-aspartate = N-carbamoyl-L-aspartate + phosphate + H(+). Its pathway is pyrimidine metabolism; UMP biosynthesis via de novo pathway; (S)-dihydroorotate from bicarbonate: step 2/3. In terms of biological role, catalyzes the condensation of carbamoyl phosphate and aspartate to form carbamoyl aspartate and inorganic phosphate, the committed step in the de novo pyrimidine nucleotide biosynthesis pathway. In Synechococcus sp. (strain RCC307), this protein is Aspartate carbamoyltransferase catalytic subunit.